Reading from the N-terminus, the 175-residue chain is RNA pyrophosphohydrolase (175 aa).

A Nudix hydrolase domain is found at 8–159 (PYRTCVGMML…KRPVYERVVK (152 aa)). Residues 47–68 (GGVDPGEDPWTAAKRELYEETS) carry the Nudix box motif.

The protein belongs to the Nudix hydrolase family. RppH subfamily. A divalent metal cation is required as a cofactor.

Functionally, accelerates the degradation of transcripts by removing pyrophosphate from the 5'-end of triphosphorylated RNA, leading to a more labile monophosphorylated state that can stimulate subsequent ribonuclease cleavage. The protein is RNA pyrophosphohydrolase of Rhodopseudomonas palustris (strain BisB18).